The primary structure comprises 141 residues: Terrelysin (141 aa).

It belongs to the aegerolysin family.

Its subcellular location is the cytoplasm. In terms of biological role, hemolysins are potential virulence factors. Has hemolytic activity against sheep erythrocytes in vitro. This chain is Terrelysin, found in Aspergillus terreus (strain NIH 2624 / FGSC A1156).